The following is a 219-amino-acid chain: 7-cyano-7-deazaguanine synthase (219 aa).

F10 to L20 contacts ATP. Zn(2+) contacts are provided by C188, C197, C200, and C203.

The protein belongs to the QueC family. As to quaternary structure, homodimer. Zn(2+) is required as a cofactor.

The enzyme catalyses 7-carboxy-7-deazaguanine + NH4(+) + ATP = 7-cyano-7-deazaguanine + ADP + phosphate + H2O + H(+). It functions in the pathway purine metabolism; 7-cyano-7-deazaguanine biosynthesis. In terms of biological role, catalyzes the ATP-dependent conversion of 7-carboxy-7-deazaguanine (CDG) to 7-cyano-7-deazaguanine (preQ(0)). In Clostridium botulinum (strain Kyoto / Type A2), this protein is 7-cyano-7-deazaguanine synthase.